We begin with the raw amino-acid sequence, 171 residues long: AAF/I fimbrial subunit (171 aa).

An N-terminal signal peptide occupies residues 1 to 28 (MKTLKNMRRKNLCITLGLVSLLSRGANA).

The protein localises to the fimbrium. The chain is AAF/I fimbrial subunit (aggA) from Escherichia coli.